A 632-amino-acid chain; its full sequence is Phosphomethylpyrimidine synthase (632 aa).

Polar residues predominate over residues Met1–Arg23. Positions Met1–Phe26 are disordered. Residues Asn221, Met250, Tyr279, His315, Ser335–Gly337, Asp376–Arg379, and Glu415 contribute to the substrate site. His419 is a Zn(2+) binding site. Tyr442 lines the substrate pocket. His483 is a binding site for Zn(2+). Cys563, Cys566, and Cys571 together coordinate [4Fe-4S] cluster.

The protein belongs to the ThiC family. In terms of assembly, homodimer. It depends on [4Fe-4S] cluster as a cofactor.

The catalysed reaction is 5-amino-1-(5-phospho-beta-D-ribosyl)imidazole + S-adenosyl-L-methionine = 4-amino-2-methyl-5-(phosphooxymethyl)pyrimidine + CO + 5'-deoxyadenosine + formate + L-methionine + 3 H(+). The protein operates within cofactor biosynthesis; thiamine diphosphate biosynthesis. In terms of biological role, catalyzes the synthesis of the hydroxymethylpyrimidine phosphate (HMP-P) moiety of thiamine from aminoimidazole ribotide (AIR) in a radical S-adenosyl-L-methionine (SAM)-dependent reaction. This chain is Phosphomethylpyrimidine synthase, found in Bradyrhizobium diazoefficiens (strain JCM 10833 / BCRC 13528 / IAM 13628 / NBRC 14792 / USDA 110).